The sequence spans 515 residues: Zinc metalloproteinase-disintegrin BA-5A (515 aa).

The signal sequence occupies residues 1–20 (MMQVLLVTICLAVFPYQGSS). Residues 21–193 (IILESGNVND…KEASQLVATS (173 aa)) constitute a propeptide that is removed on maturation. The Peptidase M12B domain occupies 203–399 (RYIKYFIVVD…YKPDCTLIRP (197 aa)). Asn-263 is a glycosylation site (N-linked (GlcNAc...) asparagine). 11 cysteine pairs are disulfide-bonded: Cys-314–Cys-394, Cys-354–Cys-378, Cys-356–Cys-361, Cys-410–Cys-429, Cys-421–Cys-439, Cys-423–Cys-434, Cys-433–Cys-456, Cys-447–Cys-453, Cys-452–Cys-478, Cys-465–Cys-485, and Cys-472–Cys-497. His-339 contacts Zn(2+). The active site involves Glu-340. 2 residues coordinate Zn(2+): His-343 and His-349. An N-linked (GlcNAc...) asparagine glycan is attached at Asn-377. The Disintegrin domain maps to 407-493 (PPVCGNDILE…DCPIDHFHRN (87 aa)). A D/ECD-tripeptide motif is present at residues 471–473 (ECD).

The protein belongs to the venom metalloproteinase (M12B) family. P-II subfamily. As to quaternary structure, monomer. Zn(2+) is required as a cofactor. In terms of tissue distribution, expressed by the venom gland.

Its subcellular location is the secreted. Snake venom zinc metalloprotease that possesses hemorrhagic activity and degrades alpha chain of fibrinogen (FGA). May inhibit alpha-2/beta-1 integrin (ITGA2/ITGB1). The chain is Zinc metalloproteinase-disintegrin BA-5A from Bitis arietans (African puff adder).